The following is a 1006-amino-acid chain: DNA polymerase (1006 aa).

This sequence belongs to the DNA polymerase type-B family. Interacts with OPG148/A20. Component of the Uracil-DNA glycosylase(UDG)-OPG148/A20-polymerase complex; OPG148/A20 and OPG116/UDG form a heterodimeric processivity factor that associates with OPG071/E9 to form the processive polymerase holoenzyme.

It catalyses the reaction DNA(n) + a 2'-deoxyribonucleoside 5'-triphosphate = DNA(n+1) + diphosphate. Its function is as follows. Catalyzes DNA synthesis. Acquires processivity by associating with a heterodimeric processivity factor comprised of the viral OPG148/A20 and OPG116/D4 proteins, thereby forming the DNA polymerase holoenzyme. Displays 3'- to 5' exonuclease activity. Might participate in viral DNA recombination. Does not perform OPG116/D4synthesis across an abasic site. This chain is DNA polymerase (OPG071), found in Bos taurus (Bovine).